The sequence spans 177 residues: Transmembrane protein 190 (177 aa).

Positions 1–21 are cleaved as a signal peptide; sequence MLGCGIPALGLLLLLQGSADG. The Extracellular segment spans residues 22-81; that stretch reads NGIQGFFYPWSCEGDIWDRESCGGQAAIDSPNLCLRLRCCYRNGVCYHQRPDENVRRKHM. In terms of domain architecture, P-type spans 31–71; the sequence is WSCEGDIWDRESCGGQAAIDSPNLCLRLRCCYRNGVCYHQR. 3 disulfides stabilise this stretch: cysteine 33–cysteine 61, cysteine 43–cysteine 60, and cysteine 55–cysteine 67. The chain crosses the membrane as a helical span at residues 82 to 102; that stretch reads WALVWTCSGLLLLSCSICLFW. Over 103 to 177 the chain is Cytoplasmic; the sequence is WAKRRDVLHM…EETEGEEEED (75 aa). The disordered stretch occupies residues 131 to 177; it reads KHRGTKKTPSTGSVPVALSKESRDVEGGTEGEGTEEGEETEGEEEED. The span at 157–177 shows a compositional bias: acidic residues; sequence GGTEGEGTEEGEETEGEEEED.

The protein resides in the membrane. The chain is Transmembrane protein 190 (TMEM190) from Homo sapiens (Human).